Here is a 286-residue protein sequence, read N- to C-terminus: Aldo-keto reductase MAP_4149 (286 aa).

Tyr-61 serves as the catalytic Proton donor. NADPH-binding residues include Leu-201, Val-203, Val-239, Arg-241, Ser-242, Arg-247, and Asn-251.

The protein belongs to the aldo/keto reductase family.

The sequence is that of Aldo-keto reductase MAP_4149 from Mycolicibacterium paratuberculosis (strain ATCC BAA-968 / K-10) (Mycobacterium paratuberculosis).